A 408-amino-acid polypeptide reads, in one-letter code: LysM domain-containing protein ARB_01488 (408 aa).

Residues 1-17 (MVKYALLPLVAVSLVQA) form the signal peptide. The region spanning 42–91 (SWINVVDASGKLTCDAFLDTINVAKRQFIFWNPQLNSDCSNIQSKASYCA) is the LysM 1 domain. Positions 98 to 178 (SKQTRGQMDP…HGPKEAPPPD (81 aa)) are disordered. Pro residues predominate over residues 106-116 (DPPPKTKPLPP). LysM domains are found at residues 270 to 320 (QYHT…RVCV) and 360 to 406 (SFEL…YACV).

Its subcellular location is the secreted. Might have a role in sequestration of chitin oligosaccharides (breakdown products of fungal cell walls that are released during invasion and act as triggers of host immunity) to dampen host defense. The chain is LysM domain-containing protein ARB_01488 from Arthroderma benhamiae (strain ATCC MYA-4681 / CBS 112371) (Trichophyton mentagrophytes).